The primary structure comprises 397 residues: Yellow-related salivary protein LJM111 (397 aa).

The N-terminal stretch at 1-18 is a signal peptide; the sequence is MKLFFFLYTFGLVQTIFG.

The protein belongs to the major royal jelly protein family. As to expression, salivary gland (at protein level).

The protein localises to the secreted. Its function is as follows. Probably modulates blood feeding of sand flies on vertebrate species by binding and sequestering different mediators involved in the host response. Binds biogenic amines. Binds adrenaline and noradrenaline with high affinity. Binds serotonin. Binds dopamine and octopamine. Exhibits anti-inflammatory effects in the host: reduces IL17A, TNF-alpha (TNF) and IFN-gamma (IFNG) production by host lymph node cells, suppresses expression of MHC-II and CD86, reduces TNF-alpha production and increases IL10 production, in host bone marrow-derived dendritic cells (BMDCs) stimulated by lipopolysaccharides. Reduces pain in mouse mechanical hypernociception model. This is Yellow-related salivary protein LJM111 from Lutzomyia longipalpis (Sand fly).